We begin with the raw amino-acid sequence, 390 residues long: Chalcone synthase (390 aa).

The active site involves Cys-164.

This sequence belongs to the thiolase-like superfamily. Chalcone/stilbene synthases family.

It carries out the reaction (E)-4-coumaroyl-CoA + 3 malonyl-CoA + 3 H(+) = 2',4,4',6'-tetrahydroxychalcone + 3 CO2 + 4 CoA. Its pathway is secondary metabolite biosynthesis; flavonoid biosynthesis. Its function is as follows. The primary product of this enzyme is 4,2',4',6'-tetrahydroxychalcone (also termed naringenin-chalcone or chalcone) which can under specific conditions spontaneously isomerize into naringenin. The chain is Chalcone synthase (CHS) from Onobrychis viciifolia (Common sainfoin).